A 184-amino-acid polypeptide reads, in one-letter code: Protein GrpE (184 aa).

Residues 1 to 12 (MADEQLNEKDLN) are compositionally biased toward basic and acidic residues. The tract at residues 1 to 22 (MADEQLNEKDLNAEEAGAVDNG) is disordered.

The protein belongs to the GrpE family. As to quaternary structure, homodimer.

The protein resides in the cytoplasm. In terms of biological role, participates actively in the response to hyperosmotic and heat shock by preventing the aggregation of stress-denatured proteins, in association with DnaK and GrpE. It is the nucleotide exchange factor for DnaK and may function as a thermosensor. Unfolded proteins bind initially to DnaJ; upon interaction with the DnaJ-bound protein, DnaK hydrolyzes its bound ATP, resulting in the formation of a stable complex. GrpE releases ADP from DnaK; ATP binding to DnaK triggers the release of the substrate protein, thus completing the reaction cycle. Several rounds of ATP-dependent interactions between DnaJ, DnaK and GrpE are required for fully efficient folding. The sequence is that of Protein GrpE from Pseudomonas putida (strain W619).